The chain runs to 484 residues: Zinc metalloproteinase/disintegrin PMMP-2 (484 aa).

The N-terminal stretch at 1–20 is a signal peptide; sequence MIQVLLVTICLAVFPYQGSS. The propeptide occupies 21–190; it reads IILESGNVDD…KASQLNLTPL (170 aa). Residues 197–395 enclose the Peptidase M12B domain; sequence RYVKLAIVVD…YNPQCILNAP (199 aa). An N-linked (GlcNAc...) asparagine glycan is attached at Asn-239. 3 disulfides stabilise this stretch: Cys-308–Cys-390, Cys-352–Cys-374, and Cys-354–Cys-357. Residue His-333 participates in Zn(2+) binding. Glu-334 is a catalytic residue. Positions 337 and 343 each coordinate Zn(2+). A propeptide spanning residues 396-413 is cleaved from the precursor; sequence LRTDTVSTPVSGNEFLEA. The region spanning 403–484 is the Disintegrin domain; the sequence is TPVSGNEFLE…ADCPRNGLYG (82 aa). Cystine bridges form between Cys-417–Cys-432, Cys-419–Cys-427, Cys-426–Cys-449, Cys-440–Cys-446, Cys-445–Cys-470, and Cys-458–Cys-477. Residues 462–464 carry the Cell attachment site motif; that stretch reads RGD.

Belongs to the venom metalloproteinase (M12B) family. P-II subfamily. P-IIa sub-subfamily. Monomer. Zn(2+) serves as cofactor. Expressed by the venom gland.

It localises to the secreted. Impairs hemostasis in the envenomed animal. Its function is as follows. Inhibits platelet aggregation induced by ADP, thrombin, platelet-activating factor and collagen. Acts by inhibiting fibrinogen interaction with platelet receptors GPIIb/GPIIIa (ITGA2B/ITGB3). This is Zinc metalloproteinase/disintegrin PMMP-2 from Protobothrops mucrosquamatus (Taiwan habu).